We begin with the raw amino-acid sequence, 334 residues long: Glycerol-3-phosphate dehydrogenase [NAD(P)+] (334 aa).

NADPH-binding residues include tryptophan 13, arginine 33, and lysine 106. The sn-glycerol 3-phosphate site is built by lysine 106, glycine 137, and serine 139. Residue alanine 141 participates in NADPH binding. Lysine 192, aspartate 245, serine 255, arginine 256, and asparagine 257 together coordinate sn-glycerol 3-phosphate. Lysine 192 acts as the Proton acceptor in catalysis. Position 256 (arginine 256) interacts with NADPH. NADPH contacts are provided by valine 280 and glutamate 282.

The protein belongs to the NAD-dependent glycerol-3-phosphate dehydrogenase family.

It localises to the cytoplasm. It carries out the reaction sn-glycerol 3-phosphate + NAD(+) = dihydroxyacetone phosphate + NADH + H(+). The catalysed reaction is sn-glycerol 3-phosphate + NADP(+) = dihydroxyacetone phosphate + NADPH + H(+). Its pathway is membrane lipid metabolism; glycerophospholipid metabolism. Catalyzes the reduction of the glycolytic intermediate dihydroxyacetone phosphate (DHAP) to sn-glycerol 3-phosphate (G3P), the key precursor for phospholipid synthesis. The sequence is that of Glycerol-3-phosphate dehydrogenase [NAD(P)+] from Chlamydia muridarum (strain MoPn / Nigg).